The chain runs to 498 residues: Lysine--tRNA ligase (498 aa).

Mg(2+)-binding residues include Glu409 and Glu416.

The protein belongs to the class-II aminoacyl-tRNA synthetase family. Homodimer. Mg(2+) serves as cofactor.

The protein localises to the cytoplasm. It catalyses the reaction tRNA(Lys) + L-lysine + ATP = L-lysyl-tRNA(Lys) + AMP + diphosphate. The protein is Lysine--tRNA ligase of Dichelobacter nodosus (strain VCS1703A).